The sequence spans 800 residues: MNRFFISTLLLLAQHLAPAAASCGLANEASLSANEVQDIYHDFVATSINYADLLKRNEDLNASLSTGSPVEITSTSCTTDTSASTPIITESTSSTSSASTTGSSSSPLPSTSTSCTTSTSIPPTGGSSSLSTPITPTVPPTSTSSTSIPIPPTSTSSTDTNSNPLPTTSTSCTTSTSIPPTGGSSSLSTPITPTVPPTSTSSTSIPIPPTSTSSTDTNSSPLPTTSTSCTTSTSIPTGGSSSLSTPITPTVPPTSTSSTSIPIPPTSTSSTDTNSSPLPTTSTSCTTSTSIPPTGNSTTPVTPTVPPTSTSSTSTPPPPASTSSTGTSSSPLPSTSTSCTTSTSIPPTGNSTTPVTPTVPPTSTSSTSTPPPPASTSSTGTSSSPLLSTSTSCTTSTSIPPTGNSTTPVTPTVPPTSSSTPLTTTNCTTSTSVPYTSTPVTSTPLATTNCTTSTSVPYTSTPVTSTPLTTTNCTTSTSIPYTSTPVTSTPLTTTNCTTSTSVPYTSTPVTSSNYTISSSTPVTSTPVTTTNCTTSTSVLYTSTPVTSTPLATTNCTTSTSVPYTSTPVTSSNYTISSSTPVTSTPVTTTNCTTSTSVLYTSTPITSPNSTSSSSTQVSWNSTTPITGTSTSKVTSSTSIPLTSTNRTSTTFTSSTSISTSSSSTATSSTSFASESSSFYSNVTTSSSTVSTPPPTTSFPSTFTTSFITSSSLSSIPNNSTEVKTASTSSGTEIKTASTSSGSSSSSSYTPASSTSTTTSSVSSRQSSSSSSFTPSSAISTAKSSFVLSTLSILIALYMVA.

The signal sequence occupies residues 1–21 (MNRFFISTLLLLAQHLAPAAA). Residues 63 to 72 (SLSTGSPVEI) are compositionally biased toward polar residues. Disordered regions lie at residues 63 to 470 (SLST…PLTT), 602 to 670 (TPIT…SSTS), and 710 to 776 (SSLS…TPSS). Composition is skewed to low complexity over residues 73–314 (TSTS…SSTS), 321–368 (STSS…SSTS), 375–444 (STSS…TSTP), and 451–470 (TTST…PLTT). Low complexity predominate over residues 710-720 (SSLSSIPNNST). A compositionally biased stretch (polar residues) spans 721-734 (EVKTASTSSGTEIK). The segment covering 735-776 (TASTSSGSSSSSSYTPASSTSTTTSSVSSRQSSSSSSFTPSS) has biased composition (low complexity).

Its subcellular location is the secreted. The protein resides in the cell surface. This is an uncharacterized protein from Schizosaccharomyces pombe (strain 972 / ATCC 24843) (Fission yeast).